Reading from the N-terminus, the 92-residue chain is Probable Fe(2+)-trafficking protein (92 aa).

This sequence belongs to the Fe(2+)-trafficking protein family.

In terms of biological role, could be a mediator in iron transactions between iron acquisition and iron-requiring processes, such as synthesis and/or repair of Fe-S clusters in biosynthetic enzymes. This chain is Probable Fe(2+)-trafficking protein, found in Shewanella halifaxensis (strain HAW-EB4).